A 467-amino-acid chain; its full sequence is Gustatory and odorant receptor 22 (467 aa).

Residues 1–106 (MIHTQMEDAQ…MPRTTFTWCS (106 aa)) are Cytoplasmic-facing. The helical transmembrane segment at 107–127 (KAFLWAYFIYACETVIVLVVA) threads the bilayer. Residues 128-144 (RERINKFISTSDKRFDE) are Extracellular-facing. Residues 145 to 165 (VIYNIIFMSIMVPHFLLPVAS) traverse the membrane as a helical segment. Topologically, residues 166–198 (WRNGSEVAKFKNMWTDFQYKYLIVTGKPIVFPK) are cytoplasmic. A helical membrane pass occupies residues 199-219 (LYPITWTLCIVSWSLSLVIIL). Residues 220–238 (SQYYLQPDFQFCHTFAYYH) are Extracellular-facing. The helical transmembrane segment at 239 to 259 (IIAMLNGFCSLWFVNCTAFGT) threads the bilayer. Residues 260-304 (ASKAFAKELTDVLATERPAAKLTEYRHLWVDLSHMMQQLGKAYSN) are Cytoplasmic-facing. Residues 305-325 (MYGIYCLVIFFTTIIATYGSL) traverse the membrane as a helical segment. At 326 to 337 (SEIIEHGATYKE) the chain is on the extracellular side. Residues 338-358 (VGLFVIVFYCMSLLFIICNEA) traverse the membrane as a helical segment. The Cytoplasmic portion of the chain corresponds to 359–414 (HHASKRVGLNFQERLLNVNLTAVDKATQKEVEMFLVAIDKNPPTMNLDGYANINRG). A helical transmembrane segment spans residues 415–435 (LITSNISFMATYLVVLMQFKL). Residues 436–467 (TLLRQSAKNAFISALKANLSRIRSLDADKVNT) lie on the Extracellular side of the membrane. Residue Asn-453 is glycosylated (N-linked (GlcNAc...) asparagine).

The protein belongs to the insect chemoreceptor superfamily. Gustatory receptor (GR) family. Gr21a subfamily. Carbon dioxide-responsive neurons coexpress GPRgr22 and GPRgr24 in the maxillary palp at both larval and adult life stages.

The protein localises to the cell membrane. Its function is as follows. Gustatory receptor which mediates acceptance or avoidance behavior, depending on its substrates. GPRgr22 and GPRgr24 together are sufficient for olfactory carbon dioxide-chemosensation. In Anopheles gambiae (African malaria mosquito), this protein is Gustatory and odorant receptor 22.